Consider the following 439-residue polypeptide: Ectonucleotide pyrophosphatase/phosphodiesterase family member 7 (439 aa).

The first 21 residues, 1-21 (MGHSAVLLSVALVILPACVTG), serve as a signal peptide directing secretion. Residues 22–422 (GPVQRQQQHK…RSGSPLSRQH (401 aa)) are Extracellular-facing. Positions 38 and 74 each coordinate Zn(2+). The segment at 71-77 (VTMTSPC) is required for enzyme activity. Thr-74 serves as the catalytic Nucleophile. Asn-95 lines the substrate pocket. Asn-99, Asn-120, Asn-145, and Asn-167 each carry an N-linked (GlcNAc...) asparagine glycan. Zn(2+) contacts are provided by Asp-198, His-202, Asp-245, and His-246. An N-linked (GlcNAc...) asparagine glycan is attached at Asn-266. His-352 is a Zn(2+) binding site. The chain crosses the membrane as a helical span at residues 423–439 (HLVVVLMGILTGLAKVV).

It belongs to the nucleotide pyrophosphatase/phosphodiesterase family. Requires Zn(2+) as cofactor. In terms of processing, N-glycosylated; required for activity and transport to the plasma membrane. As to expression, detected in small intestine (at protein level). Highly expressed in the jejunum.

The protein localises to the cell membrane. The enzyme catalyses a sphingomyelin + H2O = phosphocholine + an N-acylsphing-4-enine + H(+). It catalyses the reaction a 1-O-alkyl-2-acetyl-sn-glycero-3-phosphocholine + H2O = a 1-O-alkyl-2-acetyl-sn-glycerol + phosphocholine + H(+). It carries out the reaction 1-O-octadecyl-2-acetyl-sn-glycero-3-phosphocholine + H2O = 1-O-octadecyl-2-acetyl-sn-glycerol + phosphocholine + H(+). The catalysed reaction is 1-hexadecanoyl-sn-glycero-3-phosphocholine + H2O = 1-hexadecanoyl-sn-glycerol + phosphocholine + H(+). With respect to regulation, platelet-activating factor hydrolysis is inhibited by higher amount of sphingomyelin. The hydrolysis of platelet-activating factor and sphingomyelin can be inhibited by the presence of sphingomyelin and platelet-activating factor respectively, the inhibition of platelet-activating factor hydrolysis by sphingomyelin being stronger. PAF hydrolysis is dose-dependently increased by both taurocholate (TC) and taurodeoxycholate (TDC). Hydrolase activity against PAF is inhibited by EDTA and stimulated by 0.1-0.25 mM Zn2+. In terms of biological role, choline-specific phosphodiesterase that hydrolyzes sphingomyelin (SM) releasing the ceramide and phosphocholine and therefore is involved in sphingomyelin digestion, ceramide formation, and fatty acid (FA) absorption in the gastrointestinal tract. Also has phospholipase C activity and can also cleave phosphocholine from palmitoyl lyso-phosphatidylcholine and platelet-activating factor (PAF) leading to its inactivation. Does not have nucleotide pyrophosphatase activity. May promote cholesterol absorption by affecting the levels of sphingomyelin derived from either diet or endogenous sources, in the intestinal lumen. The chain is Ectonucleotide pyrophosphatase/phosphodiesterase family member 7 from Rattus norvegicus (Rat).